The chain runs to 533 residues: Na(+)/H(+) antiporter NhaB (533 aa).

The next 11 membrane-spanning stretches (helical) occupy residues Ile-10–Ile-30, Pro-67–Leu-87, Leu-98–Phe-118, Val-131–Ile-165, Leu-209–Pro-229, Ile-247–Val-267, Ala-310–Ile-330, Glu-355–Ile-375, Leu-396–Gly-416, Ala-454–Ile-474, and Met-481–Gln-501.

Belongs to the NhaB Na(+)/H(+) (TC 2.A.34) antiporter family.

Its subcellular location is the cell inner membrane. It carries out the reaction 2 Na(+)(in) + 3 H(+)(out) = 2 Na(+)(out) + 3 H(+)(in). In terms of biological role, na(+)/H(+) antiporter that extrudes sodium in exchange for external protons. The polypeptide is Na(+)/H(+) antiporter NhaB (Shewanella sp. (strain ANA-3)).